The primary structure comprises 496 residues: Glutathione reductase, cytosolic (496 aa).

Ser-32, Gly-33, Glu-52, Thr-69, Cys-70, and Lys-78 together coordinate FAD. Residue Ser-32 participates in glutathione binding. A disulfide bond links Cys-70 and Cys-75. Tyr-127 is a glutathione binding site. An FAD-binding site is contributed by Gly-143. NADP(+)-binding residues include Gly-208, Ile-211, Glu-214, Arg-231, Arg-237, and Gly-294. Residues Asp-335 and Thr-343 each coordinate FAD. Ala-373 contacts NADP(+). Residue His-469 participates in FAD binding. Catalysis depends on His-469, which acts as the Proton acceptor.

It belongs to the class-I pyridine nucleotide-disulfide oxidoreductase family. In terms of assembly, homodimer. It depends on FAD as a cofactor.

It localises to the cytoplasm. It carries out the reaction 2 glutathione + NADP(+) = glutathione disulfide + NADPH + H(+). Catalyzes the reduction of glutathione disulfide (GSSG) to reduced glutathione (GSH). Constitutes the major mechanism to maintain a high GSH:GSSG ratio in the cytosol. This chain is Glutathione reductase, cytosolic (GRC2), found in Oryza sativa subsp. japonica (Rice).